A 155-amino-acid polypeptide reads, in one-letter code: Endoribonuclease YbeY (155 aa).

Zn(2+) contacts are provided by His-114, His-118, and His-124.

Belongs to the endoribonuclease YbeY family. The cofactor is Zn(2+).

The protein resides in the cytoplasm. Functionally, single strand-specific metallo-endoribonuclease involved in late-stage 70S ribosome quality control and in maturation of the 3' terminus of the 16S rRNA. The chain is Endoribonuclease YbeY from Shigella dysenteriae serotype 1 (strain Sd197).